Reading from the N-terminus, the 290-residue chain is Protein translocase subunit SecF (290 aa).

6 consecutive transmembrane segments (helical) span residues 15-35 (VFMI…FTKG), 131-151 (KAIL…TVRF), 156-176 (AISA…IFAI), 184-204 (SFIA…IIVF), 234-256 (TLYT…GVVL), and 260-282 (ILAI…SAIL).

It belongs to the SecD/SecF family. SecF subfamily. Forms a complex with SecD. Part of the essential Sec protein translocation apparatus which comprises SecA, SecYEG and auxiliary proteins SecDF. Other proteins may also be involved.

The protein resides in the cell inner membrane. In terms of biological role, part of the Sec protein translocase complex. Interacts with the SecYEG preprotein conducting channel. SecDF uses the proton motive force (PMF) to complete protein translocation after the ATP-dependent function of SecA. This is Protein translocase subunit SecF from Dictyoglomus turgidum (strain DSM 6724 / Z-1310).